A 970-amino-acid polypeptide reads, in one-letter code: Pentatricopeptide repeat-containing protein At1g18485 (970 aa).

PPR repeat units lie at residues 119 to 149 (DDVL…LRSK), 150 to 185 (NLFQ…DLLP), 186 to 220 (DHFT…GLVE), 221 to 251 (DVFV…MPER), 252 to 282 (NLVS…MMEE), 291 to 325 (DVAT…RLDK), 326 to 356 (ELVL…NNNK), 357 to 391 (NVVS…GEDV), 394 to 428 (DEVT…EFVY), 429 to 459 (NELV…IRSK), 460 to 494 (TVNS…GLLP), 495 to 529 (DSFT…WLER), 530 to 560 (DLFV…MEDK), 561 to 595 (SLVS…GIQL), 597 to 630 (GISM…LLED), 631 to 661 (DAFI…LKEK), 662 to 696 (STAS…GHNP), 697 to 727 (DDLT…MKSS), and 733 to 764 (NLKH…MSEE). Residues 770–845 (WKSLLSSCRI…AGCSWIELNR (76 aa)) are type E motif. Positions 846 to 875 (KVFSFVVGERFLDGFEEIKSLWSILEMKIS) are type E(+) motif. The interval 876–970 (KMGYRPDTMS…NGVCSCGDYW (95 aa)) is type DYW motif.

The protein belongs to the PPR family. PCMP-H subfamily.

This is Pentatricopeptide repeat-containing protein At1g18485 (PCMP-H8) from Arabidopsis thaliana (Mouse-ear cress).